The sequence spans 422 residues: Trichothecene biosynthesis transcription regulator TRI10 (422 aa).

It belongs to the TRI10 transcription regulator family.

Its subcellular location is the nucleus. Transcriptional activator of all of the trichothecene biosynthesis genes. Acts upstream of the cluster-encoded transcription factor TRI6 and is necessary for full expression of both the other trichothecene genes and the genes for the primary metabolic pathway that precedes the trichothecene biosynthetic pathway. This Trichoderma arundinaceum protein is Trichothecene biosynthesis transcription regulator TRI10.